The sequence spans 378 residues: Deoxyguanosinetriphosphate triphosphohydrolase-like protein (378 aa).

The tract at residues 1-28 (MLAPYACQPGESRGRQQPESMSTFRSPF) is disordered. Over residues 15–26 (RQQPESMSTFRS) the composition is skewed to polar residues. Residues 62 to 198 (RLTHSIEVAQ…AAIADDVAYS (137 aa)) form the HD domain.

It belongs to the dGTPase family. Type 2 subfamily.

This Cereibacter sphaeroides (strain ATCC 17025 / ATH 2.4.3) (Rhodobacter sphaeroides) protein is Deoxyguanosinetriphosphate triphosphohydrolase-like protein.